Here is a 397-residue protein sequence, read N- to C-terminus: Acetate kinase (397 aa).

Position 7 (asparagine 7) interacts with Mg(2+). Lysine 14 provides a ligand contact to ATP. Arginine 90 lines the substrate pocket. Aspartate 147 functions as the Proton donor/acceptor in the catalytic mechanism. ATP contacts are provided by residues 207 to 211 (HLGNG), 282 to 284 (DFR), and 330 to 334 (GLGEN). Glutamate 383 contributes to the Mg(2+) binding site.

Belongs to the acetokinase family. In terms of assembly, homodimer. Mg(2+) serves as cofactor. Requires Mn(2+) as cofactor.

Its subcellular location is the cytoplasm. The enzyme catalyses acetate + ATP = acetyl phosphate + ADP. It participates in metabolic intermediate biosynthesis; acetyl-CoA biosynthesis; acetyl-CoA from acetate: step 1/2. Its function is as follows. Catalyzes the formation of acetyl phosphate from acetate and ATP. Can also catalyze the reverse reaction. The chain is Acetate kinase from Clostridium botulinum (strain Loch Maree / Type A3).